A 161-amino-acid polypeptide reads, in one-letter code: Protein yippee-like B0546.4 (161 aa).

The Yippee domain maps to 14 to 111 (SLYGCVVCNT…IENANFEKIA (98 aa)). Residues Cys18, Cys21, Cys74, and Cys77 each contribute to the Zn(2+) site. Residues 117–161 (PLGEDRQEAPPAPNLEMSRYPLEAEKKSRPQYRTVSVSSSSSAEC) are disordered. Low complexity predominate over residues 151-161 (VSVSSSSSAEC).

It belongs to the yippee family.

This chain is Protein yippee-like B0546.4, found in Caenorhabditis elegans.